A 453-amino-acid chain; its full sequence is Bifunctional protein GlmU (453 aa).

Residues 1 to 226 are pyrophosphorylase; it reads MKFSAVILAA…PIEVEGVNDR (226 aa). UDP-N-acetyl-alpha-D-glucosamine-binding positions include 8-11, Lys-22, Gln-73, 78-79, 100-102, Gly-137, Glu-151, Asn-166, and Asn-224; these read LAAG, GT, and YGD. Asp-102 is a Mg(2+) binding site. Asn-224 contributes to the Mg(2+) binding site. A linker region spans residues 227–247; that stretch reads AQLARLERAFQAAQAKKLLEQ. The tract at residues 248-453 is N-acetyltransferase; that stretch reads GVMLRDPARF…TGWQRPVKKK (206 aa). Arg-330 and Lys-348 together coordinate UDP-N-acetyl-alpha-D-glucosamine. His-360 functions as the Proton acceptor in the catalytic mechanism. Residues Tyr-363 and Asn-374 each coordinate UDP-N-acetyl-alpha-D-glucosamine. Acetyl-CoA is bound by residues Ala-377, 383 to 384, Ser-402, Ala-420, and Arg-437; that span reads NY.

In the N-terminal section; belongs to the N-acetylglucosamine-1-phosphate uridyltransferase family. It in the C-terminal section; belongs to the transferase hexapeptide repeat family. In terms of assembly, homotrimer. Mg(2+) serves as cofactor.

The protein resides in the cytoplasm. The enzyme catalyses alpha-D-glucosamine 1-phosphate + acetyl-CoA = N-acetyl-alpha-D-glucosamine 1-phosphate + CoA + H(+). It carries out the reaction N-acetyl-alpha-D-glucosamine 1-phosphate + UTP + H(+) = UDP-N-acetyl-alpha-D-glucosamine + diphosphate. It participates in nucleotide-sugar biosynthesis; UDP-N-acetyl-alpha-D-glucosamine biosynthesis; N-acetyl-alpha-D-glucosamine 1-phosphate from alpha-D-glucosamine 6-phosphate (route II): step 2/2. The protein operates within nucleotide-sugar biosynthesis; UDP-N-acetyl-alpha-D-glucosamine biosynthesis; UDP-N-acetyl-alpha-D-glucosamine from N-acetyl-alpha-D-glucosamine 1-phosphate: step 1/1. It functions in the pathway bacterial outer membrane biogenesis; LPS lipid A biosynthesis. Functionally, catalyzes the last two sequential reactions in the de novo biosynthetic pathway for UDP-N-acetylglucosamine (UDP-GlcNAc). The C-terminal domain catalyzes the transfer of acetyl group from acetyl coenzyme A to glucosamine-1-phosphate (GlcN-1-P) to produce N-acetylglucosamine-1-phosphate (GlcNAc-1-P), which is converted into UDP-GlcNAc by the transfer of uridine 5-monophosphate (from uridine 5-triphosphate), a reaction catalyzed by the N-terminal domain. In Vibrio vulnificus (strain YJ016), this protein is Bifunctional protein GlmU.